The primary structure comprises 100 residues: Urease subunit gamma (100 aa).

It belongs to the urease gamma subunit family. As to quaternary structure, heterotrimer of UreA (gamma), UreB (beta) and UreC (alpha) subunits. Three heterotrimers associate to form the active enzyme.

It localises to the cytoplasm. The catalysed reaction is urea + 2 H2O + H(+) = hydrogencarbonate + 2 NH4(+). It functions in the pathway nitrogen metabolism; urea degradation; CO(2) and NH(3) from urea (urease route): step 1/1. The protein is Urease subunit gamma of Ectopseudomonas mendocina (strain ymp) (Pseudomonas mendocina).